A 191-amino-acid polypeptide reads, in one-letter code: Holliday junction branch migration complex subunit RuvA (191 aa).

Residues 1-64 are domain I; the sequence is MIGSITGNVE…DNITQLYGFL (64 aa). Residues 65–142 form a domain II region; the sequence is NRQEQDYLKM…KMPIEETFSI (78 aa). Residues 143-146 form a flexible linker region; it reads IEND. Residues 146 to 191 form a domain III region; that stretch reads DDSLAALISLGYEKLKAFNVIQEIKSKTPDASTQEVIRKALQKLSQ.

This sequence belongs to the RuvA family. In terms of assembly, homotetramer. Forms an RuvA(8)-RuvB(12)-Holliday junction (HJ) complex. HJ DNA is sandwiched between 2 RuvA tetramers; dsDNA enters through RuvA and exits via RuvB. An RuvB hexamer assembles on each DNA strand where it exits the tetramer. Each RuvB hexamer is contacted by two RuvA subunits (via domain III) on 2 adjacent RuvB subunits; this complex drives branch migration. In the full resolvosome a probable DNA-RuvA(4)-RuvB(12)-RuvC(2) complex forms which resolves the HJ.

Its subcellular location is the cytoplasm. Its function is as follows. The RuvA-RuvB-RuvC complex processes Holliday junction (HJ) DNA during genetic recombination and DNA repair, while the RuvA-RuvB complex plays an important role in the rescue of blocked DNA replication forks via replication fork reversal (RFR). RuvA specifically binds to HJ cruciform DNA, conferring on it an open structure. The RuvB hexamer acts as an ATP-dependent pump, pulling dsDNA into and through the RuvAB complex. HJ branch migration allows RuvC to scan DNA until it finds its consensus sequence, where it cleaves and resolves the cruciform DNA. This Ehrlichia ruminantium (strain Welgevonden) protein is Holliday junction branch migration complex subunit RuvA.